The sequence spans 367 residues: Phosphoribosylaminoimidazole-succinocarboxamide synthase (367 aa).

The protein belongs to the SAICAR synthetase family.

It catalyses the reaction 5-amino-1-(5-phospho-D-ribosyl)imidazole-4-carboxylate + L-aspartate + ATP = (2S)-2-[5-amino-1-(5-phospho-beta-D-ribosyl)imidazole-4-carboxamido]succinate + ADP + phosphate + 2 H(+). Its pathway is purine metabolism; IMP biosynthesis via de novo pathway; 5-amino-1-(5-phospho-D-ribosyl)imidazole-4-carboxamide from 5-amino-1-(5-phospho-D-ribosyl)imidazole-4-carboxylate: step 1/2. The sequence is that of Phosphoribosylaminoimidazole-succinocarboxamide synthase from Shewanella halifaxensis (strain HAW-EB4).